The sequence spans 146 residues: Hemoglobin subunit beta-1 (146 aa).

One can recognise a Globin domain in the interval 2-146; sequence EWSSNERSTI…VISALSRQYF (145 aa). Positions 63 and 92 each coordinate heme b.

It belongs to the globin family. As to quaternary structure, heterotetramer of two alpha chains and two beta chains. Red blood cells.

In terms of biological role, involved in oxygen transport from gills to the various peripheral tissues. The chain is Hemoglobin subunit beta-1 (hbb1) from Muraena helena (Mediterranean moray).